The primary structure comprises 134 residues: Salivary protein 15 Iric-1 (134 aa).

An N-terminal signal peptide occupies residues 1–21 (MESFVAMKVVCITVLFVIVAV). The N-linked (GlcNAc...) asparagine glycan is linked to Asn-22. The interval 48 to 67 (PSYIRNPQKLALELLEICKN) is required for Borrelia OspC-binding. N-linked (GlcNAc...) asparagine glycosylation is found at Asn-91 and Asn-103. The segment at 115 to 134 (GPNGETCAEKSKCVGHIPGC) is CD4-binding.

Belongs to the salp15 family. Monomer. Interacts with host CD4. Interacts with host DC-SIGN (CD209). In terms of assembly, (Microbial infection) Interacts with Borrelia outer surface protein C (OspC). As to expression, expressed in salivary glands. Detected in fed adult female.

It is found in the secreted. In terms of biological role, salivary tick protein that downregulates host immune system by binding to both dendritic cells, and CD4(+) T cells. Specifically binds to the CD4 coreceptor on T cells. This interaction prevents the activation of the Src kinase, Lck, and its downstream substrate Zap-70, and results in deficient activation of PLCgamma1, the repression of calcium fluxes triggered by T-cell antigen receptor (TCR) ligation, and a subsequent reduction in interleukin-2 production. This salivary protein also binds to DC-SIGN (CD209) on dendritic cells (DC) and activates the Raf-1 kinase/MEK signaling pathway that results in down-regulating expression of pro-inflammatory cytokines. Furthermore, it inhibits T cell proliferation induced by DCs. In addition, it inhibits in vitro keratinocyte inflammation induced by Borrelia burgdorferi or by the major outer surface protein (OspC) of Borrelia. In addition, it downregulates chemokines and monocyte chemoattractant protein 1, as well as several antimicrobial peptides such as defensins, cathelicidin, psoriasin, and RNase 7. Apart from its immunomodulatory activities, it is also associated with protection of Borrelia spirochetes from antibody-mediated killing through its binding to OspC. In vivo, tests on different immune disease animal models show promising therapeutic results, e.g., in inhibiting HIV infection, experimental autoimmune encephalomyelitis, transplantation rejection, and asthma. (Microbial infection) Protects Borrelia garinii (strain VSBP) from host complement-mediated killing by binding to the surface of spirochetes and preventing deposition of host C5b-9 membrane attack complexes. Protects Borrelia garinii (strain A87S) from host complement-mediated killing. Its function is as follows. (Microbial infection) Partially protects Borrelia burgdorferi (strains VS215 and B31) from host complement-mediated killing. The polypeptide is Salivary protein 15 Iric-1 (Ixodes ricinus (Common tick)).